The chain runs to 230 residues: uncharacterized protein (230 aa).

The interval 1 to 57 (MPGPHSPNPGVGTNGPAPYPEPSSHEPQALDYPHDLGAAEPAFAPGPADDAALPPAA) is disordered. Residues 38–55 (AAEPAFAPGPADDAALPP) show a composition bias toward low complexity. A helical transmembrane segment spans residues 75 to 95 (LLIGIVVALALVSAMTAAIIY).

It localises to the membrane. This is an uncharacterized protein from Mycobacterium tuberculosis (strain CDC 1551 / Oshkosh).